Consider the following 380-residue polypeptide: Cytochrome b (380 aa).

4 consecutive transmembrane segments (helical) span residues Phe33–Met53, Trp77–Val98, Trp113–Leu133, and Phe178–Leu198. Positions 83 and 97 each coordinate heme b. Heme b is bound by residues His182 and His196. An a ubiquinone-binding site is contributed by His201. 4 consecutive transmembrane segments (helical) span residues Ile226–Phe246, Leu288–Asn308, Ile320–Xaa340, and Xaa347–Pro367.

Belongs to the cytochrome b family. In terms of assembly, the cytochrome bc1 complex contains 11 subunits: 3 respiratory subunits (MT-CYB, CYC1 and UQCRFS1), 2 core proteins (UQCRC1 and UQCRC2) and 6 low-molecular weight proteins (UQCRH/QCR6, UQCRB/QCR7, UQCRQ/QCR8, UQCR10/QCR9, UQCR11/QCR10 and a cleavage product of UQCRFS1). This cytochrome bc1 complex then forms a dimer. Requires heme b as cofactor.

It localises to the mitochondrion inner membrane. Functionally, component of the ubiquinol-cytochrome c reductase complex (complex III or cytochrome b-c1 complex) that is part of the mitochondrial respiratory chain. The b-c1 complex mediates electron transfer from ubiquinol to cytochrome c. Contributes to the generation of a proton gradient across the mitochondrial membrane that is then used for ATP synthesis. The protein is Cytochrome b (MT-CYB) of Rhipidomys leucodactylus (White-footed climbing mouse).